The chain runs to 296 residues: Nitrogenase iron protein (296 aa).

11–18 is a binding site for ATP; sequence GKGGIGKS. Cys99 contacts [4Fe-4S] cluster. Residue Arg102 is modified to ADP-ribosylarginine; by dinitrogenase reductase ADP-ribosyltransferase. Cys134 contacts [4Fe-4S] cluster.

This sequence belongs to the NifH/BchL/ChlL family. Homodimer. It depends on [4Fe-4S] cluster as a cofactor. In terms of processing, the reversible ADP-ribosylation of Arg-102 inactivates the nitrogenase reductase and regulates nitrogenase activity.

The enzyme catalyses N2 + 8 reduced [2Fe-2S]-[ferredoxin] + 16 ATP + 16 H2O = H2 + 8 oxidized [2Fe-2S]-[ferredoxin] + 2 NH4(+) + 16 ADP + 16 phosphate + 6 H(+). Functionally, the key enzymatic reactions in nitrogen fixation are catalyzed by the nitrogenase complex, which has 2 components: the iron protein and the molybdenum-iron protein. The chain is Nitrogenase iron protein from Dechloromonas aromatica (strain RCB).